A 393-amino-acid chain; its full sequence is Bifunctional enzyme IspD/IspF (393 aa).

The tract at residues 1-234 (MTTSQRTAAI…ARLAASLGDI (234 aa)) is 2-C-methyl-D-erythritol 4-phosphate cytidylyltransferase. Residues 235-393 (RTGTGYDVHA…SATIRLPWGA (159 aa)) are 2-C-methyl-D-erythritol 2,4-cyclodiphosphate synthase. Positions 241 and 243 each coordinate a divalent metal cation. 4-CDP-2-C-methyl-D-erythritol 2-phosphate is bound by residues 241–243 (DVH) and 267–268 (HS). H275 serves as a coordination point for a divalent metal cation. Residues 289–291 (DIG), 365–368 (TTSE), F372, and R375 each bind 4-CDP-2-C-methyl-D-erythritol 2-phosphate.

In the N-terminal section; belongs to the IspD/TarI cytidylyltransferase family. IspD subfamily. It in the C-terminal section; belongs to the IspF family. It depends on a divalent metal cation as a cofactor.

The catalysed reaction is 2-C-methyl-D-erythritol 4-phosphate + CTP + H(+) = 4-CDP-2-C-methyl-D-erythritol + diphosphate. It catalyses the reaction 4-CDP-2-C-methyl-D-erythritol 2-phosphate = 2-C-methyl-D-erythritol 2,4-cyclic diphosphate + CMP. It participates in isoprenoid biosynthesis; isopentenyl diphosphate biosynthesis via DXP pathway; isopentenyl diphosphate from 1-deoxy-D-xylulose 5-phosphate: step 2/6. Its pathway is isoprenoid biosynthesis; isopentenyl diphosphate biosynthesis via DXP pathway; isopentenyl diphosphate from 1-deoxy-D-xylulose 5-phosphate: step 4/6. In terms of biological role, bifunctional enzyme that catalyzes the formation of 4-diphosphocytidyl-2-C-methyl-D-erythritol from CTP and 2-C-methyl-D-erythritol 4-phosphate (MEP) (IspD), and catalyzes the conversion of 4-diphosphocytidyl-2-C-methyl-D-erythritol 2-phosphate (CDP-ME2P) to 2-C-methyl-D-erythritol 2,4-cyclodiphosphate (ME-CPP) with a corresponding release of cytidine 5-monophosphate (CMP) (IspF). This chain is Bifunctional enzyme IspD/IspF, found in Bradyrhizobium sp. (strain ORS 278).